A 211-amino-acid polypeptide reads, in one-letter code: Large ribosomal subunit protein uL4 (211 aa).

Positions 41-53 are enriched in polar residues; sequence QAHSRQGTASTLT. Residues 41 to 85 form a disordered region; the sequence is QAHSRQGTASTLTRAEVRGGGRKPYKQKGTGRARQGSIRTPLRPG. The span at 60–71 shows a compositional bias: basic residues; it reads GGRKPYKQKGTG.

The protein belongs to the universal ribosomal protein uL4 family. In terms of assembly, part of the 50S ribosomal subunit.

One of the primary rRNA binding proteins, this protein initially binds near the 5'-end of the 23S rRNA. It is important during the early stages of 50S assembly. It makes multiple contacts with different domains of the 23S rRNA in the assembled 50S subunit and ribosome. Its function is as follows. Forms part of the polypeptide exit tunnel. The chain is Large ribosomal subunit protein uL4 from Prochlorococcus marinus (strain SARG / CCMP1375 / SS120).